Here is a 433-residue protein sequence, read N- to C-terminus: Phosphomethylpyrimidine synthase (433 aa).

Substrate is bound by residues Asn-66, Met-94, Tyr-123, His-162, 184–186 (SRG), 225–228 (DALR), and Glu-264. Zn(2+) is bound at residue His-268. Tyr-291 is a substrate binding site. His-332 serves as a coordination point for Zn(2+). [4Fe-4S] cluster-binding residues include Cys-408, Cys-411, and Cys-415.

It belongs to the ThiC family. [4Fe-4S] cluster serves as cofactor.

It catalyses the reaction 5-amino-1-(5-phospho-beta-D-ribosyl)imidazole + S-adenosyl-L-methionine = 4-amino-2-methyl-5-(phosphooxymethyl)pyrimidine + CO + 5'-deoxyadenosine + formate + L-methionine + 3 H(+). It participates in cofactor biosynthesis; thiamine diphosphate biosynthesis. Functionally, catalyzes the synthesis of the hydroxymethylpyrimidine phosphate (HMP-P) moiety of thiamine from aminoimidazole ribotide (AIR) in a radical S-adenosyl-L-methionine (SAM)-dependent reaction. This chain is Phosphomethylpyrimidine synthase, found in Saccharolobus islandicus (strain M.16.27) (Sulfolobus islandicus).